The following is a 354-amino-acid chain: UDP-N-acetylglucosamine--N-acetylmuramyl-(pentapeptide) pyrophosphoryl-undecaprenol N-acetylglucosamine transferase 1 (354 aa).

UDP-N-acetyl-alpha-D-glucosamine contacts are provided by residues threonine 12–glycine 14, arginine 163, serine 193, and glutamine 287.

It belongs to the glycosyltransferase 28 family. MurG subfamily.

The protein resides in the cell membrane. The catalysed reaction is di-trans,octa-cis-undecaprenyl diphospho-N-acetyl-alpha-D-muramoyl-L-alanyl-D-glutamyl-meso-2,6-diaminopimeloyl-D-alanyl-D-alanine + UDP-N-acetyl-alpha-D-glucosamine = di-trans,octa-cis-undecaprenyl diphospho-[N-acetyl-alpha-D-glucosaminyl-(1-&gt;4)]-N-acetyl-alpha-D-muramoyl-L-alanyl-D-glutamyl-meso-2,6-diaminopimeloyl-D-alanyl-D-alanine + UDP + H(+). The protein operates within cell wall biogenesis; peptidoglycan biosynthesis. Cell wall formation. Catalyzes the transfer of a GlcNAc subunit on undecaprenyl-pyrophosphoryl-MurNAc-pentapeptide (lipid intermediate I) to form undecaprenyl-pyrophosphoryl-MurNAc-(pentapeptide)GlcNAc (lipid intermediate II). The chain is UDP-N-acetylglucosamine--N-acetylmuramyl-(pentapeptide) pyrophosphoryl-undecaprenol N-acetylglucosamine transferase 1 from Bacillus thuringiensis (strain Al Hakam).